The primary structure comprises 425 residues: Kynureninase (425 aa).

Pyridoxal 5'-phosphate is bound by residues L105, T106, 133–136 (FPSD), D218, H221, and Y243. An N6-(pyridoxal phosphate)lysine modification is found at K244. Pyridoxal 5'-phosphate is bound by residues W274 and N302.

The protein belongs to the kynureninase family. In terms of assembly, homodimer. It depends on pyridoxal 5'-phosphate as a cofactor.

The catalysed reaction is L-kynurenine + H2O = anthranilate + L-alanine + H(+). The enzyme catalyses 3-hydroxy-L-kynurenine + H2O = 3-hydroxyanthranilate + L-alanine + H(+). Its pathway is amino-acid degradation; L-kynurenine degradation; L-alanine and anthranilate from L-kynurenine: step 1/1. It functions in the pathway cofactor biosynthesis; NAD(+) biosynthesis; quinolinate from L-kynurenine: step 2/3. Its function is as follows. Catalyzes the cleavage of L-kynurenine (L-Kyn) and L-3-hydroxykynurenine (L-3OHKyn) into anthranilic acid (AA) and 3-hydroxyanthranilic acid (3-OHAA), respectively. The protein is Kynureninase of Flavobacterium johnsoniae (strain ATCC 17061 / DSM 2064 / JCM 8514 / BCRC 14874 / CCUG 350202 / NBRC 14942 / NCIMB 11054 / UW101) (Cytophaga johnsonae).